The sequence spans 108 residues: TYRO protein tyrosine kinase-binding protein (108 aa).

An N-terminal signal peptide occupies residues 1–25 (MGRLGPSNGLLPLLLAVGGFSLVQA). Over 26 to 36 (QRECSCSAVSP) the chain is Extracellular. A helical membrane pass occupies residues 37 to 57 (GILAGIVLGDLVLTLLIALAV). Asp-46 contacts Ca(2+). Residues 58–108 (YSLGRLVPRTRGAVDVTRKQHIAETESAYQELQGQRSDVYSDLNTQRQYYK) are Cytoplasmic-facing. The ITAM domain occupies 75–103 (RKQHIAETESAYQELQGQRSDVYSDLNTQ). Residues Tyr-86 and Tyr-97 each carry the phosphotyrosine modification.

It belongs to the TYROBP family. As to quaternary structure, homodimer; disulfide-linked. Homotrimer; disulfide-linked. Homotetramer; disulfide-linked. Homotrimers and homotetramers form when low levels of partner receptors are available and is competitive with assembly with interacting receptors. They may represent alternative oligomerization states or may be intermediates in the receptor assembly process. Binding of a metal cation aids in homooligomerization through coordination of the metal ion by the subunits of the oligomer. Interacts with TREM1. Interacts with TREM2. Interacts with CLECSF5. Interacts with CD300LB and CD300C2. Interacts with CD300E. Interacts (via ITAM domain) with SYK (via SH2 domains); activates SYK mediating neutrophils and macrophages integrin-mediated activation. Interacts with KLRC2. Interacts with CD300H. Interacts with KLRD1. Interacts with SIGLEC1. In terms of processing, following ligand binding by associated receptors, tyrosine phosphorylated in the ITAM domain which leads to activation of additional tyrosine kinases and subsequent cell activation. As to expression, highly expressed in spleen, liver and thymus. Weakly expressed in lymph nodes. Expressed in peripheral blood leukocytes, granulocytes, macrophages, and monocytes. LPS does not increase expression in granulocytes.

The protein resides in the cell membrane. Its function is as follows. Adapter protein which non-covalently associates with activating receptors found on the surface of a variety of immune cells to mediate signaling and cell activation following ligand binding by the receptors. TYROBP is tyrosine-phosphorylated in the ITAM domain following ligand binding by the associated receptors which leads to activation of additional tyrosine kinases and subsequent cell activation. Also has an inhibitory role in some cells. Non-covalently associates with activating receptors of the CD300 family to mediate cell activation. Also mediates cell activation through association with activating receptors of the CD200R family. Required for neutrophil activation mediated by integrin. Required for the activation of myeloid cells mediated by the CLEC5A/MDL1 receptor. Associates with natural killer (NK) cell receptors such as the KLRD1/KLRC2 heterodimer to mediate NK cell activation. Associates with TREM1 to mediate activation of neutrophils and monocytes. Associates with TREM2 on monocyte-derived dendritic cells to mediate up-regulation of chemokine receptor CCR7 and dendritic cell maturation and survival. Association with TREM2 mediates cytokine-induced formation of multinucleated giant cells which are formed by the fusion of macrophages. Stabilizes the TREM2 C-terminal fragment (TREM2-CTF) produced by TREM2 ectodomain shedding which suppresses the release of pro-inflammatory cytokines. In microglia, required with TREM2 for phagocytosis of apoptotic neurons. Required with ITGAM/CD11B in microglia to control production of microglial superoxide ions which promote the neuronal apoptosis that occurs during brain development. Promotes pro-inflammatory responses in microglia following nerve injury which accelerates degeneration of injured neurons. Positively regulates the expression of the IRAK3/IRAK-M kinase and IL10 production by liver dendritic cells and inhibits their T cell allosimulatory ability. Negatively regulates B cell proliferation. Required for CSF1-mediated osteoclast cytoskeletal organization. Positively regulates multinucleation during osteoclast development. In Sus scrofa (Pig), this protein is TYRO protein tyrosine kinase-binding protein.